The sequence spans 302 residues: Recombination-associated protein RdgC (302 aa).

The protein belongs to the RdgC family.

The protein localises to the cytoplasm. It localises to the nucleoid. May be involved in recombination. This Xylella fastidiosa (strain M12) protein is Recombination-associated protein RdgC.